Here is a 370-residue protein sequence, read N- to C-terminus: Peptide chain release factor 2 (370 aa).

Q252 carries the post-translational modification N5-methylglutamine.

It belongs to the prokaryotic/mitochondrial release factor family. Post-translationally, methylated by PrmC. Methylation increases the termination efficiency of RF2.

The protein localises to the cytoplasm. Functionally, peptide chain release factor 2 directs the termination of translation in response to the peptide chain termination codons UGA and UAA. The polypeptide is Peptide chain release factor 2 (Mycobacterium avium (strain 104)).